The following is a 326-amino-acid chain: N-acetyl-gamma-glutamyl-phosphate reductase (326 aa).

Cys155 is an active-site residue.

Belongs to the NAGSA dehydrogenase family. Type 1 subfamily.

It is found in the cytoplasm. The enzyme catalyses N-acetyl-L-glutamate 5-semialdehyde + phosphate + NADP(+) = N-acetyl-L-glutamyl 5-phosphate + NADPH + H(+). It functions in the pathway amino-acid biosynthesis; L-arginine biosynthesis; N(2)-acetyl-L-ornithine from L-glutamate: step 3/4. In terms of biological role, catalyzes the NADPH-dependent reduction of N-acetyl-5-glutamyl phosphate to yield N-acetyl-L-glutamate 5-semialdehyde. The sequence is that of N-acetyl-gamma-glutamyl-phosphate reductase from Shewanella oneidensis (strain ATCC 700550 / JCM 31522 / CIP 106686 / LMG 19005 / NCIMB 14063 / MR-1).